The sequence spans 180 residues: Beta-lactoglobulin-1/B (180 aa).

A signal peptide spans 1 to 18 (MKCLLLALGLALACGVQA). Disulfide bonds link Cys-84-Cys-178, Cys-124-Cys-137, and Cys-124-Cys-139.

This sequence belongs to the calycin superfamily. Lipocalin family. In terms of assembly, under physiological conditions beta-lactoglobulin exists as an equilibrium mixture of monomeric and dimeric forms. Post-translationally, alternate disulfide bonds occur in equal amounts.

It localises to the secreted. In terms of biological role, lactoglobulin is the primary component of whey, it binds retinol and is probably involved in the transport of that molecule. The sequence is that of Beta-lactoglobulin-1/B from Ovis aries (Sheep).